Here is a 345-residue protein sequence, read N- to C-terminus: tRNA N6-adenosine threonylcarbamoyltransferase (345 aa).

Positions 111 and 115 each coordinate Fe cation. Substrate contacts are provided by residues 134 to 138 (LVSGG), D167, G180, and N276. D304 is a binding site for Fe cation.

The protein belongs to the KAE1 / TsaD family. It depends on Fe(2+) as a cofactor.

It localises to the cytoplasm. It carries out the reaction L-threonylcarbamoyladenylate + adenosine(37) in tRNA = N(6)-L-threonylcarbamoyladenosine(37) in tRNA + AMP + H(+). Functionally, required for the formation of a threonylcarbamoyl group on adenosine at position 37 (t(6)A37) in tRNAs that read codons beginning with adenine. Is involved in the transfer of the threonylcarbamoyl moiety of threonylcarbamoyl-AMP (TC-AMP) to the N6 group of A37, together with TsaE and TsaB. TsaD likely plays a direct catalytic role in this reaction. The sequence is that of tRNA N6-adenosine threonylcarbamoyltransferase from Alcanivorax borkumensis (strain ATCC 700651 / DSM 11573 / NCIMB 13689 / SK2).